The chain runs to 351 residues: Ferredoxin--NADP reductase (351 aa).

7 residues coordinate FAD: D44, Q52, Y57, V97, F132, D296, and S337.

It belongs to the ferredoxin--NADP reductase type 2 family. In terms of assembly, homodimer. FAD serves as cofactor.

The enzyme catalyses 2 reduced [2Fe-2S]-[ferredoxin] + NADP(+) + H(+) = 2 oxidized [2Fe-2S]-[ferredoxin] + NADPH. The protein is Ferredoxin--NADP reductase of Paraburkholderia phymatum (strain DSM 17167 / CIP 108236 / LMG 21445 / STM815) (Burkholderia phymatum).